The sequence spans 464 residues: Methylenetetrahydrofolate--tRNA-(uracil-5-)-methyltransferase TrmFO (464 aa).

13–18 is a binding site for FAD; the sequence is GGGLAG.

The protein belongs to the MnmG family. TrmFO subfamily. Requires FAD as cofactor.

Its subcellular location is the cytoplasm. The catalysed reaction is uridine(54) in tRNA + (6R)-5,10-methylene-5,6,7,8-tetrahydrofolate + NADH + H(+) = 5-methyluridine(54) in tRNA + (6S)-5,6,7,8-tetrahydrofolate + NAD(+). The enzyme catalyses uridine(54) in tRNA + (6R)-5,10-methylene-5,6,7,8-tetrahydrofolate + NADPH + H(+) = 5-methyluridine(54) in tRNA + (6S)-5,6,7,8-tetrahydrofolate + NADP(+). Its function is as follows. Catalyzes the folate-dependent formation of 5-methyl-uridine at position 54 (M-5-U54) in all tRNAs. In Bartonella bacilliformis (strain ATCC 35685 / KC583 / Herrer 020/F12,63), this protein is Methylenetetrahydrofolate--tRNA-(uracil-5-)-methyltransferase TrmFO.